The chain runs to 178 residues: Acireductone dioxygenase (178 aa).

The interval 1-22 (MKAYWYDNKPGDQREPHDSGRP) is disordered. Basic and acidic residues predominate over residues 9–22 (KPGDQREPHDSGRP). Positions 81, 83, 87, and 126 each coordinate Fe(2+). 4 residues coordinate Ni(2+): histidine 81, histidine 83, glutamate 87, and histidine 126.

The protein belongs to the acireductone dioxygenase (ARD) family. The cofactor is Fe(2+). Ni(2+) serves as cofactor.

The protein resides in the cytoplasm. The protein localises to the nucleus. It carries out the reaction 1,2-dihydroxy-5-(methylsulfanyl)pent-1-en-3-one + O2 = 4-methylsulfanyl-2-oxobutanoate + formate + 2 H(+). The enzyme catalyses 1,2-dihydroxy-5-(methylsulfanyl)pent-1-en-3-one + O2 = 3-(methylsulfanyl)propanoate + CO + formate + 2 H(+). It participates in amino-acid biosynthesis; L-methionine biosynthesis via salvage pathway; L-methionine from S-methyl-5-thio-alpha-D-ribose 1-phosphate: step 5/6. Functionally, catalyzes 2 different reactions between oxygen and the acireductone 1,2-dihydroxy-3-keto-5-methylthiopentene (DHK-MTPene) depending upon the metal bound in the active site. Fe-containing acireductone dioxygenase (Fe-ARD) produces formate and 2-keto-4-methylthiobutyrate (KMTB), the alpha-ketoacid precursor of methionine in the methionine recycle pathway. Ni-containing acireductone dioxygenase (Ni-ARD) produces methylthiopropionate, carbon monoxide and formate, and does not lie on the methionine recycle pathway. This Emericella nidulans (strain FGSC A4 / ATCC 38163 / CBS 112.46 / NRRL 194 / M139) (Aspergillus nidulans) protein is Acireductone dioxygenase (adi1).